Consider the following 365-residue polypeptide: Phosphoserine aminotransferase (365 aa).

L-glutamate is bound at residue Arg40. Pyridoxal 5'-phosphate-binding positions include 74–75 (AS), Phe99, Thr155, Asp177, and Gln200. Lys201 is subject to N6-(pyridoxal phosphate)lysine. Residue 241-242 (NT) participates in pyridoxal 5'-phosphate binding.

The protein belongs to the class-V pyridoxal-phosphate-dependent aminotransferase family. SerC subfamily. Homodimer. Pyridoxal 5'-phosphate serves as cofactor.

It is found in the cytoplasm. It carries out the reaction O-phospho-L-serine + 2-oxoglutarate = 3-phosphooxypyruvate + L-glutamate. The enzyme catalyses 4-(phosphooxy)-L-threonine + 2-oxoglutarate = (R)-3-hydroxy-2-oxo-4-phosphooxybutanoate + L-glutamate. It functions in the pathway amino-acid biosynthesis; L-serine biosynthesis; L-serine from 3-phospho-D-glycerate: step 2/3. Catalyzes the reversible conversion of 3-phosphohydroxypyruvate to phosphoserine and of 3-hydroxy-2-oxo-4-phosphonooxybutanoate to phosphohydroxythreonine. The polypeptide is Phosphoserine aminotransferase (Lactococcus lactis subsp. lactis (strain IL1403) (Streptococcus lactis)).